Here is a 495-residue protein sequence, read N- to C-terminus: Cytochrome P450 2E1 (495 aa).

Phenylalanine 298–threonine 303 serves as a coordination point for substrate. Residue cysteine 437 participates in heme binding.

This sequence belongs to the cytochrome P450 family. Interacts with chaperones HSP70 and HSP90; this interaction is required for initial targeting to mitochondria. Requires heme as cofactor.

It localises to the endoplasmic reticulum membrane. Its subcellular location is the microsome membrane. It is found in the mitochondrion inner membrane. It carries out the reaction an organic molecule + reduced [NADPH--hemoprotein reductase] + O2 = an alcohol + oxidized [NADPH--hemoprotein reductase] + H2O + H(+). The catalysed reaction is (5Z,8Z,11Z)-eicosatrienoate + reduced [NADPH--hemoprotein reductase] + O2 = 19-hydroxy-(5Z,8Z,11Z)-eicosatrienoate + oxidized [NADPH--hemoprotein reductase] + H2O + H(+). The enzyme catalyses (5Z,8Z,11Z,14Z,17Z)-eicosapentaenoate + reduced [NADPH--hemoprotein reductase] + O2 = 19-hydroxy-(5Z,8Z,11Z,14Z,17Z)-eicosapentaenoate + oxidized [NADPH--hemoprotein reductase] + H2O + H(+). It catalyses the reaction (4Z,7Z,10Z,13Z,16Z,19Z)-docosahexaenoate + reduced [NADPH--hemoprotein reductase] + O2 = 21-hydroxy-(4Z,7Z,10Z,13Z,16Z,19Z)-docosahexaenoate + oxidized [NADPH--hemoprotein reductase] + H2O + H(+). It carries out the reaction dodecanoate + reduced [NADPH--hemoprotein reductase] + O2 = 11-hydroxydodecanoate + oxidized [NADPH--hemoprotein reductase] + H2O + H(+). The catalysed reaction is tetradecanoate + reduced [NADPH--hemoprotein reductase] + O2 = 13-hydroxytetradecanoate + oxidized [NADPH--hemoprotein reductase] + H2O + H(+). The enzyme catalyses 4-nitrophenol + NADPH + O2 + H(+) = 4-nitrocatechol + NADP(+) + H2O. It functions in the pathway lipid metabolism; fatty acid metabolism. With respect to regulation, the omega-1 hydroxylase activity is stimulated by cytochrome b5. Functionally, a cytochrome P450 monooxygenase involved in the metabolism of fatty acids. Mechanistically, uses molecular oxygen inserting one oxygen atom into a substrate, and reducing the second into a water molecule, with two electrons provided by NADPH via cytochrome P450 reductase (NADPH--hemoprotein reductase). Catalyzes the hydroxylation of carbon-hydrogen bonds. Hydroxylates fatty acids specifically at the omega-1 position displaying the highest catalytic activity for saturated fatty acids. May be involved in the oxidative metabolism of xenobiotics. This chain is Cytochrome P450 2E1 (CYP2E1), found in Sus scrofa (Pig).